The chain runs to 95 residues: Integration host factor subunit beta (95 aa).

Belongs to the bacterial histone-like protein family. As to quaternary structure, heterodimer of an alpha and a beta chain.

Functionally, this protein is one of the two subunits of integration host factor, a specific DNA-binding protein that functions in genetic recombination as well as in transcriptional and translational control. The polypeptide is Integration host factor subunit beta (Klebsiella pneumoniae (strain 342)).